The primary structure comprises 2694 residues: Neurobeachin-like protein 1 (2694 aa).

Disordered stretches follow at residues 1289–1314 (VLMK…TDEE), 1330–1350 (SLED…DSSV), and 1381–1411 (CEMS…SVHS). The span at 1290 to 1314 (LMKDNDKNMSTEDTKKNSDEKTDEE) shows a compositional bias: basic and acidic residues. Over residues 1383-1409 (MSDSGSQVPDSLPSTPSPVESTKSFSV) the composition is skewed to polar residues. The 98-residue stretch at 1883–1980 (DQKEKLVLME…VRNKIYSRLL (98 aa)) folds into the BEACH-type PH domain. The BEACH domain maps to 1992-2284 (RSPQELFKAS…QLLKEPHPPR (293 aa)). WD repeat units follow at residues 2439–2478 (RHMD…GVPV) and 2490–2531 (GHTN…RTLR).

Belongs to the WD repeat neurobeachin family. In terms of tissue distribution, highly expressed in brain, kidney, prostate and testis. Weakly expressed in ovary, small intestine, colon and peripheral blood leukocytes. May be correlative to several tumors, such as ovary serous adenocarcinoma and metastasis mammary gland carcinoma breast.

The protein is Neurobeachin-like protein 1 (NBEAL1) of Homo sapiens (Human).